A 153-amino-acid polypeptide reads, in one-letter code: Large ribosomal subunit protein bL9 (153 aa).

It belongs to the bacterial ribosomal protein bL9 family.

In terms of biological role, binds to the 23S rRNA. The sequence is that of Large ribosomal subunit protein bL9 from Mycoplasma mycoides subsp. mycoides SC (strain CCUG 32753 / NCTC 10114 / PG1).